Reading from the N-terminus, the 782-residue chain is Protein bicaudal D (782 aa).

Residues 15–77 adopt a coiled-coil conformation; sequence VQDLQMEVER…RHELDITQEA (63 aa). The residue at position 103 (serine 103) is a Phosphoserine. Residues 107 to 249 are a coiled coil; it reads ETSLNLQIFD…LETLQGEREA (143 aa). Serine 285, serine 288, and serine 305 each carry phosphoserine. Threonine 306 carries the post-translational modification Phosphothreonine. A Phosphoserine modification is found at serine 310. Coiled coils occupy residues 320–368 and 444–477; these read SEIH…FMSR and TTTL…TLTH. Residue serine 528 is modified to Phosphoserine. 2 coiled-coil regions span residues 603–630 and 695–743; these read EKVN…KREQ and CEEY…MEMD. Residues 699-722 are interaction with Rab6; that stretch reads VTQVDDLNRQLEAAEEEKKTLNQL. Residues 744–782 are disordered; it reads REMRHVRRPMPAQRGTSGKSSFSTRPSSRNPASSNANPF. The span at 757–767 shows a compositional bias: polar residues; sequence RGTSGKSSFST. Residues 768–782 show a composition bias toward low complexity; the sequence is RPSSRNPASSNANPF.

It belongs to the BicD family. As to quaternary structure, may homodimerize but does not interact with BicDR. Interacts (via C-terminal domain) with Rab6. In ovaries, expressed in oocyte and nurse cells.

It localises to the cytoplasm. Its subcellular location is the cytoskeleton. Functionally, this protein is essential for differentiation. It may play a role in localizing of Nanos (a maternal determinant) activity in oocytes. Functions redundantly with BicDR. During oogenesis, plays a specific role, together with Rab6 but independently of Sec5, in the polarization of the oocyte microtubule cytoskeleton, in oskar mRNA localization and in the anterodorsal secretion of grk. Plays a role in the biogenesis of annulate lamellae containing nuclear pore complex components. During macrochaetae development, together with BicDR, involved in Rab 6 and Spn-F stability and distribution and actin cytoskeleton organization. In Drosophila melanogaster (Fruit fly), this protein is Protein bicaudal D.